We begin with the raw amino-acid sequence, 357 residues long: Peptide chain release factor 1 (357 aa).

Q233 is subject to N5-methylglutamine.

This sequence belongs to the prokaryotic/mitochondrial release factor family. Post-translationally, methylated by PrmC. Methylation increases the termination efficiency of RF1.

The protein resides in the cytoplasm. Its function is as follows. Peptide chain release factor 1 directs the termination of translation in response to the peptide chain termination codons UAG and UAA. The polypeptide is Peptide chain release factor 1 (Leuconostoc citreum (strain KM20)).